The primary structure comprises 523 residues: MPRDIPATKGVYLLERVTNKEINLENIDEEMRMEQVRQAGAKLDWASFGQAVRRNLQEKRNTIDADGRIDVLKSLAFMKTKLPIEADAPMEEKIRILAESLGCTHVRTTRGWTITKPEELNVDLTIKNGEVDTVVLSFWEEAAFYSGEATKMLHKGEWSELRDRLASMLAVYNKDLDRNDRKTCKAAMDVLGSMLKTMNADEMYTSIQNNNYGYYLHRSDLRQGRLYYNVEPLYRRVRSKHHTYSLQKEDWDILPFFEFSFVPSDSVHAFPEHNPYGEWKETGSAKAAVCLKLSKGVLVSEPTRRKLHEISARSTTIQCYTNCYRYLTGSVLIKDNLKMITQFPGECTQHHYTIDRSSFTSEGDSVITEIYLKRLQDFHKVIEILRKEAMHISIWESVLADCYELQGLEERVVPAINMFVNLSRDMITVRFMTKYAPIRVCIRDGVWIEAKVEVVNDQTGAKVADRVDELLTRKLNETWSIPIMLTFAVSGEDCALEQMKVPLREENPETKLPTPTKIIVHKN.

It belongs to the Mediator complex subunit 1 family. Component of the Mediator complex.

The protein resides in the nucleus. In terms of biological role, component of the Mediator complex, a coactivator involved in the regulated transcription of nearly all RNA polymerase II-dependent genes. Mediator functions as a bridge to convey information from gene-specific regulatory proteins to the basal RNA polymerase II transcription machinery. Mediator is recruited to promoters by direct interactions with regulatory proteins and serves as a scaffold for the assembly of a functional preinitiation complex with RNA polymerase II and the general transcription factors. This is Mediator of RNA polymerase II transcription subunit 1.2 (mdt-1.2) from Caenorhabditis briggsae.